We begin with the raw amino-acid sequence, 66 residues long: Large ribosomal subunit protein bL28 (66 aa).

Residues 1 to 26 (MAKDAITGARTRFGNQRSHALNSSRR) are disordered. A compositionally biased stretch (polar residues) spans 13-25 (FGNQRSHALNSSR).

Belongs to the bacterial ribosomal protein bL28 family.

This Leuconostoc citreum (strain KM20) protein is Large ribosomal subunit protein bL28.